The sequence spans 354 residues: tRNA N6-adenosine threonylcarbamoyltransferase (354 aa).

H115 and H119 together coordinate Fe cation. Residues 138 to 142 (LVSGG), D171, G184, and N285 contribute to the substrate site. D313 provides a ligand contact to Fe cation.

Belongs to the KAE1 / TsaD family. Fe(2+) is required as a cofactor.

It localises to the cytoplasm. It catalyses the reaction L-threonylcarbamoyladenylate + adenosine(37) in tRNA = N(6)-L-threonylcarbamoyladenosine(37) in tRNA + AMP + H(+). Its function is as follows. Required for the formation of a threonylcarbamoyl group on adenosine at position 37 (t(6)A37) in tRNAs that read codons beginning with adenine. Is involved in the transfer of the threonylcarbamoyl moiety of threonylcarbamoyl-AMP (TC-AMP) to the N6 group of A37, together with TsaE and TsaB. TsaD likely plays a direct catalytic role in this reaction. This Albidiferax ferrireducens (strain ATCC BAA-621 / DSM 15236 / T118) (Rhodoferax ferrireducens) protein is tRNA N6-adenosine threonylcarbamoyltransferase.